The sequence spans 264 residues: tRNA (guanine-N(1)-)-methyltransferase (264 aa).

Residues Gly-125 and 145–150 contribute to the S-adenosyl-L-methionine site; that span reads LGDFVL.

This sequence belongs to the RNA methyltransferase TrmD family. In terms of assembly, homodimer.

It is found in the cytoplasm. It carries out the reaction guanosine(37) in tRNA + S-adenosyl-L-methionine = N(1)-methylguanosine(37) in tRNA + S-adenosyl-L-homocysteine + H(+). Its function is as follows. Specifically methylates guanosine-37 in various tRNAs. This chain is tRNA (guanine-N(1)-)-methyltransferase, found in Burkholderia cenocepacia (strain ATCC BAA-245 / DSM 16553 / LMG 16656 / NCTC 13227 / J2315 / CF5610) (Burkholderia cepacia (strain J2315)).